The primary structure comprises 215 residues: Eukaryotic translation initiation factor 4E-1 (215 aa).

A disordered region spans residues 1–32; that stretch reads MAEDTETRPASAGAEEREEGEIADDGDGSSAA. A compositionally biased stretch (acidic residues) spans 16 to 27; that stretch reads EREEGEIADDGD. EIF4G-binding stretches follow at residues 40–43 and 50–86; these read HPLE and FDNP…NNIH. Residues 58-63, Lys-90, and 108-109 contribute to the mRNA site; these read RQVAWG and WE. Cys-113 and Cys-151 are joined by a disulfide. Residues 134 to 143 form an EIF4G-binding region; it reads HTLLAMIGEQ. MRNA-binding positions include 158–163 and 203–207; these read RQKQER and KRSDK.

Belongs to the eukaryotic initiation factor 4E family. As to quaternary structure, EIF4F is a multi-subunit complex, the composition of which varies with external and internal environmental conditions. It is composed of at least EIF4A, EIF4E and EIF4G. EIF4E is also known to interact with other partners. In higher plants two isoforms of EIF4F have been identified, named isoform EIF4F and isoform EIF(iso)4F. Isoform EIF4F has subunits p220 and p26, whereas isoform EIF(iso)4F has subunits p82 and p28. In terms of processing, according to the redox status, the Cys-113-Cys-151 disulfide bridge may have a role in regulating protein function by affecting its ability to bind capped mRNA.

Its subcellular location is the nucleus. It is found in the cytoplasm. In terms of biological role, component of the protein complex eIF4F, which is involved in the recognition of the mRNA cap, ATP-dependent unwinding of 5'-terminal secondary structure and recruitment of mRNA to the ribosome. Recognizes and binds the 7-methylguanosine-containing mRNA cap during an early step in the initiation of protein synthesis and facilitates ribosome binding by inducing the unwinding of the mRNAs secondary structures. In Triticum aestivum (Wheat), this protein is Eukaryotic translation initiation factor 4E-1.